The chain runs to 381 residues: Lipid-A-disaccharide synthase (381 aa).

The protein belongs to the LpxB family.

The enzyme catalyses a lipid X + a UDP-2-N,3-O-bis[(3R)-3-hydroxyacyl]-alpha-D-glucosamine = a lipid A disaccharide + UDP + H(+). The protein operates within bacterial outer membrane biogenesis; LPS lipid A biosynthesis. Condensation of UDP-2,3-diacylglucosamine and 2,3-diacylglucosamine-1-phosphate to form lipid A disaccharide, a precursor of lipid A, a phosphorylated glycolipid that anchors the lipopolysaccharide to the outer membrane of the cell. The chain is Lipid-A-disaccharide synthase from Solibacter usitatus (strain Ellin6076).